Here is a 175-residue protein sequence, read N- to C-terminus: Ferritin light chain (175 aa).

Residues 7–156 (QNYSPEVEAA…DHLTNIRRLS (150 aa)) form the Ferritin-like diiron domain. 5 residues coordinate Fe cation: glutamate 54, glutamate 57, glutamate 58, glutamate 61, and glutamate 64.

It belongs to the ferritin family. Oligomer of 24 subunits. There are two types of subunits: L (light) chain and H (heavy) chain. The major chain can be light or heavy, depending on the species and tissue type. The functional molecule forms a roughly spherical shell with a diameter of 12 nm and contains a central cavity into which the insoluble mineral iron core is deposited. Interacts with NCOA4.

The protein localises to the cytoplasmic vesicle. It localises to the autophagosome. It is found in the cytoplasm. Its subcellular location is the autolysosome. In terms of biological role, stores iron in a soluble, non-toxic, readily available form. Important for iron homeostasis. Iron is taken up in the ferrous form and deposited as ferric hydroxides after oxidation. Also plays a role in delivery of iron to cells. Mediates iron uptake in capsule cells of the developing kidney. Delivery to lysosomes by the cargo receptor NCOA4 for autophagic degradation and release or iron. This Oryctolagus cuniculus (Rabbit) protein is Ferritin light chain (FTL).